The primary structure comprises 359 residues: MVNLPRDRMDQVVKRFEMLEAQMSAGPAPDAYVKMASEYAELQDMVAKVRQLRSAEHEQADLEAMLADKGTDAEMRALAEADLPDVEERIEALQKDIQILLLPKDAADDKNAILEIRAGTGGDEAALFAGDLFRMYERYAAERGWRFETVSASDGDAGGFKEIIATVSGKGVFAHLKFESGVHRVQRVPATEASGRIHTSAATVAVLPEAEEVDIEIRAEDIRIDTMRASGSGGQHVNTTDSAVRITHLPTGIMVVQAEKSQHQNRAKAMQILRARLYDLERSKADEERSESRKSQVGSGDRSERIRTYNFPQGRVTDHRINLTLYKLDRVMMGELDEIVDALIADHQSKLLADIGLDG.

Residue Q235 is modified to N5-methylglutamine. Residues 283-294 (SKADEERSESRK) show a composition bias toward basic and acidic residues. The interval 283–309 (SKADEERSESRKSQVGSGDRSERIRTY) is disordered.

This sequence belongs to the prokaryotic/mitochondrial release factor family. Post-translationally, methylated by PrmC. Methylation increases the termination efficiency of RF1.

The protein localises to the cytoplasm. In terms of biological role, peptide chain release factor 1 directs the termination of translation in response to the peptide chain termination codons UAG and UAA. The chain is Peptide chain release factor 1 from Mesorhizobium japonicum (strain LMG 29417 / CECT 9101 / MAFF 303099) (Mesorhizobium loti (strain MAFF 303099)).